Consider the following 561-residue polypeptide: Cloacin (561 aa).

3 stretches are compositionally biased toward gly residues: residues M1–A21, S29–T40, and F66–Q91. 5 disordered regions span residues M1–S93, P254–G273, V304–G326, K432–R507, and R530–L561. The tract at residues M1 to T180 is involved in the translocation of the protein across the cell membrane. The responsible for the receptor binding activity stretch occupies residues D200 to S420. Composition is skewed to basic and acidic residues over residues Q306–G326 and E440–P494. The segment at L421–L561 is ribonuclease activity. Residues F540–L561 are binding of immunity protein.

Belongs to the cloacin colicin family.

Inactivates ribosomes by hydrolyzing 16S RNA in 30S ribosomes at a specific site. Functionally, colicins are polypeptide toxins produced by and active against E.coli and closely related bacteria. The polypeptide is Cloacin (ccl) (Escherichia coli).